A 648-amino-acid polypeptide reads, in one-letter code: Mitotic interactor and substrate of PLK1 (648 aa).

S77 is modified (phosphoserine; by CDK1). Phosphothreonine is present on residues T149 and T190. Position 220 is a phosphoserine (S220). Disordered regions lie at residues 242–383 and 430–460; these read VNDP…PEAR and KATESPRHVSESSGRSLSSKQEWSKPPGKAT. The residue at position 253 (S253) is a Phosphoserine; by CDK1. Basic and acidic residues predominate over residues 255 to 281; sequence ETPKETPIEREIRLAQEREAELREQRG. T256 is modified (phosphothreonine; by CDK1). Phosphoserine is present on S318. Residues 325-339 show a composition bias toward basic and acidic residues; the sequence is MVQETQREEDHRREG. At T347 the chain carries Phosphothreonine; by CDK1. Over residues 349–367 the composition is skewed to polar residues; that stretch reads DWPSQDPQPGLQRSLSSDC. Residues S352 and S364 each carry the phosphoserine modification. Phosphoserine; by PLK1 occurs at positions 365 and 439. The span at 440–450 shows a compositional bias: polar residues; sequence ESSGRSLSSKQ. S507 and S509 each carry phosphoserine. A coiled-coil region spans residues 511–534; sequence DLLEREMESVLRREREVAEERRNA. The interval 539 to 568 is disordered; it reads VFSPVPAEDESHEQDSRSSSRASGITGSYS. The residue at position 541 (S541) is a Phosphoserine; by CDK1. S554 is modified (phosphoserine; by PLK1). The span at 557-568 shows a compositional bias: polar residues; sequence SSRASGITGSYS. At S644 the chain carries Phosphoserine.

It belongs to the MISP family. In terms of assembly, associates with F-actin. Interacts with DCTN1; this interaction regulates DCTN1 distribution at the cell cortex. Interacts with PTK2/FAK and MAPRE1. Phosphorylated by CDK1 and PLK1. CDK1 is the priming kinase for PLK1 phosphorylation. Phosphorylation by PLK1 is required for proper spindle orientation at metaphase.

Its subcellular location is the cell junction. The protein resides in the focal adhesion. It is found in the cytoplasm. The protein localises to the cytoskeleton. It localises to the cell cortex. Its function is as follows. Plays a role in mitotic spindle orientation and mitotic progression. Regulates the distribution of dynactin at the cell cortex in a PLK1-dependent manner, thus stabilizing cortical and astral microtubule attachments required for proper mitotic spindle positioning. May link microtubules to the actin cytoskeleton and focal adhesions. May be required for directed cell migration and centrosome orientation. May also be necessary for proper stacking of the Golgi apparatus. This Mus musculus (Mouse) protein is Mitotic interactor and substrate of PLK1.